The following is a 544-amino-acid chain: Matrilin-1 (544 aa).

The signal sequence occupies residues 1–26 (MRALSGPRLMLCGLLLLLFQAPCALG). The region spanning 42 to 217 (DLVFVVDSSR…SVIEKLSKKF (176 aa)) is the VWFA 1 domain. The N-linked (GlcNAc...) asparagine glycan is linked to asparagine 77. The 41-residue stretch at 224–264 (VSDLCATGDHDCEQVCVSSPGSYTCACREGFTLNSDGKTCN) folds into the EGF-like domain. Intrachain disulfides connect cysteine 228/cysteine 239, cysteine 235/cysteine 248, and cysteine 250/cysteine 263. In terms of domain architecture, VWFA 2 spans 276–448 (DLVFLIDGSK…KTINQIGKKL (173 aa)). N-linked (GlcNAc...) asparagine glycosylation is present at asparagine 345.

Homotrimer. Part of a complex composed of MATN1 (via VWFA1 domain), type 2 collagens and type 6 collagens. Forms a complex (via covalent bonds) with ACAN; the interaction increases in abundance with increasing age of the organism via an increase in occupancy of MATN1 binding sites. Interacts with COMP. Post-translationally, N-glycosylated; reduces binding affinity for type 2 collagens. As to expression, expressed in trachea from fetus into adulthood (at protein level).

It localises to the secreted. It is found in the extracellular space. The protein resides in the extracellular matrix. Its function is as follows. A major component of the extracellular matrix of non-articular cartilage. Binds to type 2 collagens and forms long concatenated protein networks as part of the extracellular matrix. Required for the network-like organization and bundling of collagen fibrils surrounding chondrocytes in the zones of maturation and hypertrophy. Required for mechanotransduction and adaption to mechanical loading in cartilage chondrocytes, resulting in an increase in expression of the extracellular matrix components ACAN and COL2A1. Acts as a moderator of angiogenesis in response to injury. This Bos taurus (Bovine) protein is Matrilin-1.